The following is a 322-amino-acid chain: MPEAAPPVADARGSSPTATTGPGADATLSAVEPFLAHLQIERQVSAHTLDAYRRDLAALIGWASAQGSEDVAQLDSAQLRKFVTAEHRRGLSPKSLQRRLSACRSYYAWLLKHGRIATSPAAALRAPKAPRKLPQVLDADEAVRLVEVPTDAPLGLRDRALLELFYSSGLRLSELCALRWRDLDLDSGLVTVLGKGGKQRLVPVGSHAVAALRAWQRDSGGSAQTHVFPGRAGGAISQRAVQIRIKQLAVRQGMFKHVHPHMLRHSFASHILESSGDLRGVQELLGHSDIATTQIYTHLDFQHLAKVYDAAHPRAKRKKATE.

The disordered stretch occupies residues 1–25 (MPEAAPPVADARGSSPTATTGPGAD). Over residues 16 to 25 (PTATTGPGAD) the composition is skewed to low complexity. The Core-binding (CB) domain maps to 25–111 (DATLSAVEPF…ACRSYYAWLL (87 aa)). Residues 132–309 (KLPQVLDADE…DFQHLAKVYD (178 aa)) form the Tyr recombinase domain. Residues R171, K195, H261, R264, and H287 contribute to the active site. Y296 (O-(3'-phospho-DNA)-tyrosine intermediate) is an active-site residue.

Belongs to the 'phage' integrase family. XerC subfamily. As to quaternary structure, forms a cyclic heterotetrameric complex composed of two molecules of XerC and two molecules of XerD.

It localises to the cytoplasm. Its function is as follows. Site-specific tyrosine recombinase, which acts by catalyzing the cutting and rejoining of the recombining DNA molecules. The XerC-XerD complex is essential to convert dimers of the bacterial chromosome into monomers to permit their segregation at cell division. It also contributes to the segregational stability of plasmids. This Xanthomonas campestris pv. campestris (strain 8004) protein is Tyrosine recombinase XerC.